Reading from the N-terminus, the 503-residue chain is ATP synthase subunit alpha (503 aa).

169 to 176 (GDRGTGKT) contacts ATP.

Belongs to the ATPase alpha/beta chains family. F-type ATPases have 2 components, CF(1) - the catalytic core - and CF(0) - the membrane proton channel. CF(1) has five subunits: alpha(3), beta(3), gamma(1), delta(1), epsilon(1). CF(0) has three main subunits: a(1), b(2) and c(9-12). The alpha and beta chains form an alternating ring which encloses part of the gamma chain. CF(1) is attached to CF(0) by a central stalk formed by the gamma and epsilon chains, while a peripheral stalk is formed by the delta and b chains.

The protein localises to the cell inner membrane. The enzyme catalyses ATP + H2O + 4 H(+)(in) = ADP + phosphate + 5 H(+)(out). Produces ATP from ADP in the presence of a proton gradient across the membrane. The alpha chain is a regulatory subunit. The polypeptide is ATP synthase subunit alpha (Leptospira interrogans serogroup Icterohaemorrhagiae serovar copenhageni (strain Fiocruz L1-130)).